The sequence spans 311 residues: Pyrimidine-specific ribonucleoside hydrolase RihA (311 aa).

His-240 is a catalytic residue.

Belongs to the IUNH family. RihA subfamily.

In terms of biological role, hydrolyzes cytidine or uridine to ribose and cytosine or uracil, respectively. The protein is Pyrimidine-specific ribonucleoside hydrolase RihA of Salmonella newport (strain SL254).